The following is a 710-amino-acid chain: Prolyl endopeptidase (710 aa).

Met-1 is modified (N-acetylmethionine). At Lys-157 the chain carries N6-acetyllysine. Active-site charge relay system residues include Ser-554, Asp-641, and His-680.

The protein belongs to the peptidase S9A family.

Its subcellular location is the cytoplasm. It catalyses the reaction Hydrolysis of Pro-|-Xaa &gt;&gt; Ala-|-Xaa in oligopeptides.. Functionally, cleaves peptide bonds on the C-terminal side of prolyl residues within peptides that are up to approximately 30 amino acids long. The polypeptide is Prolyl endopeptidase (Prep) (Mus musculus (Mouse)).